A 204-amino-acid chain; its full sequence is Ribonuclease HII (204 aa).

The 197-residue stretch at 1–197 (MILGIDEAGR…KNRILNPKLL (197 aa)) folds into the RNase H type-2 domain. The a divalent metal cation site is built by Asp6, Glu7, and Asp103.

The protein belongs to the RNase HII family. It depends on Mn(2+) as a cofactor. Mg(2+) is required as a cofactor.

It is found in the cytoplasm. The catalysed reaction is Endonucleolytic cleavage to 5'-phosphomonoester.. In terms of biological role, endonuclease that specifically degrades the RNA of RNA-DNA hybrids. In Helicobacter pylori (strain Shi470), this protein is Ribonuclease HII.